The sequence spans 202 residues: Neurensin-2 (202 aa).

The next 2 membrane-spanning stretches (helical) occupy residues 65–85 (VAVA…GYAV) and 116–136 (VVGA…LFLI). Positions 162–202 (RDEPEKLSPAFHETSSQSPFLTPPSPFGQQSVQTSQPQRDL) are disordered. A compositionally biased stretch (polar residues) spans 188–202 (FGQQSVQTSQPQRDL).

It belongs to the VMP family. As to expression, expressed specifically in brain where it is widely expressed, with highest levels of expression in thalamus and hypothalamus. In brain, found in neural cell bodies and detected in many regions of the limbic system, such as the septum nucleus, horizontal and vertical limbs of the diagonal band, hippocampus, amygdaloid nucleus, and habernula nucleus. Also localizes to small vesicles found in the perinuclear region of Neuro2a and PC12 cells.

The protein resides in the membrane. Its function is as follows. May play a role in maintenance and/or transport of vesicles. The polypeptide is Neurensin-2 (Mus musculus (Mouse)).